Reading from the N-terminus, the 244-residue chain is Gas vesicle protein F (244 aa).

Positions 1 to 109 (MTVGLYLYGI…QLKELFAKLS (109 aa)) are N-terminus. Residues 110–233 (GQREVSIKIF…GDRLRIRYNN (124 aa)) form a C-terminus, modifed ferredoxin fold region. Residues 234–244 (LTAPYTFAQLI) are C-tail.

This sequence belongs to the gas vesicle GvpF/GvpL family. As to quaternary structure, binds GvpA.

Its subcellular location is the gas vesicle. Its function is as follows. A minor component of the gas vesicle, may be involved in preventing GvpA aggregation during gas vesicle nucleation. Gas vesicles (GV) are hollow, gas filled proteinaceous nanostructures. During planktonic growth they allow positioning of the organism at a favorable depth for light or nutrient acquisition. The polypeptide is Gas vesicle protein F (Microcystis aeruginosa (strain PCC 7806)).